Consider the following 175-residue polypeptide: CASP-like protein 2C1 (175 aa).

Over 1-7 the chain is Cytoplasmic; sequence MVRLRET. Residues 8-28 traverse the membrane as a helical segment; the sequence is EVILRLCIVFFILLSSCLIGL. Topologically, residues 29 to 51 are extracellular; sequence DSQTKEIAYIHKKVSFRYLLALE. The helical transmembrane segment at 52–72 threads the bilayer; sequence AELYINVVVAAYNLVQIGLGW. Over 73-91 the chain is Cytoplasmic; that stretch reads YNVEQKTSNPKWFSYLLDQ. Residues 92–112 traverse the membrane as a helical segment; that stretch reads TAAYVVFAGTSAAAQHSLLVV. Topologically, residues 113-136 are extracellular; sequence TGSRELQWMKWCYKFTRFCFQMGS. The helical transmembrane segment at 137 to 157 threads the bilayer; sequence AIILNYIAAALMVLLSSISAF. Over 158–175 the chain is Cytoplasmic; it reads NLFRLYSPKRFFSFKSSS.

The protein belongs to the Casparian strip membrane proteins (CASP) family. Homodimer and heterodimers.

The protein resides in the cell membrane. The polypeptide is CASP-like protein 2C1 (Arabidopsis lyrata subsp. lyrata (Lyre-leaved rock-cress)).